The chain runs to 124 residues: Small ribosomal subunit protein uS11 (124 aa).

Residues 102 to 124 form a disordered region; it reads RIGRIEDATPIPHDGTTPKRKNR.

Belongs to the universal ribosomal protein uS11 family. In terms of assembly, part of the 30S ribosomal subunit.

Located on the platform of the 30S subunit. The polypeptide is Small ribosomal subunit protein uS11 (Methanococcus maripaludis (strain C5 / ATCC BAA-1333)).